Here is a 344-residue protein sequence, read N- to C-terminus: L-rhamnose-proton symporter (344 aa).

The next 10 membrane-spanning stretches (helical) occupy residues 4-24, 38-58, 68-88, 101-121, 131-151, 175-195, 214-234, 259-279, 290-310, and 321-341; these read AITM…CFYA, WSVG…ALLL, FNLS…IGNI, MGIG…TPII, TEGG…VGIV, LLLA…MNAA, LPSY…FCFI, ILLS…YAWG, MSWM…GLVL, and VAVL…VGLG.

Belongs to the L-rhamnose transporter (TC 2.A.7.6) family.

The protein resides in the cell inner membrane. It catalyses the reaction L-rhamnopyranose(in) + H(+)(in) = L-rhamnopyranose(out) + H(+)(out). In terms of biological role, uptake of L-rhamnose across the cytoplasmic membrane with the concomitant transport of protons into the cell (symport system). The chain is L-rhamnose-proton symporter from Salmonella typhi.